We begin with the raw amino-acid sequence, 59 residues long: Large ribosomal subunit protein uL30 (59 aa).

It belongs to the universal ribosomal protein uL30 family. In terms of assembly, part of the 50S ribosomal subunit.

This Geobacter metallireducens (strain ATCC 53774 / DSM 7210 / GS-15) protein is Large ribosomal subunit protein uL30.